The following is a 429-amino-acid chain: uncharacterized protein (429 aa).

11 helical membrane passes run 27-47 (PFFFLFCLFIPFDNTSLQSIG), 48-68 (GIMTASPSALILLPGLFVSIL), 78-98 (ILLCFFGVLLISFLYYFYWVF), 106-126 (IFILDRGSRYFLLYVFYFLAL), 142-162 (ALIIIVVIFSVLLNYLDPAII), 198-218 (LLLAVLLNWSTFFLVTVTIVI), 219-239 (AILTTSKGAALSFLICICFYF), 249-269 (VLLSLCSIVISYIIFKYYFLD), 288-308 (FIVGLKIFLFNPLGVGFFGYL), 351-371 (LILDLLIIYGVFFLIPFIYFI), and 399-419 (FFISHLGSYFTPFCIAFLIIL).

It is found in the cell membrane. May function as a transporter. This is an uncharacterized protein from Klebsiella pneumoniae.